A 951-amino-acid chain; its full sequence is Valine--tRNA ligase (951 aa).

The short motif at proline 42–histidine 52 is the 'HIGH' region element. Positions lysine 554–serine 558 match the 'KMSKS' region motif. Lysine 557 contacts ATP. Residues alanine 880–glutamine 944 adopt a coiled-coil conformation.

Belongs to the class-I aminoacyl-tRNA synthetase family. ValS type 1 subfamily. As to quaternary structure, monomer.

It is found in the cytoplasm. It carries out the reaction tRNA(Val) + L-valine + ATP = L-valyl-tRNA(Val) + AMP + diphosphate. In terms of biological role, catalyzes the attachment of valine to tRNA(Val). As ValRS can inadvertently accommodate and process structurally similar amino acids such as threonine, to avoid such errors, it has a 'posttransfer' editing activity that hydrolyzes mischarged Thr-tRNA(Val) in a tRNA-dependent manner. The protein is Valine--tRNA ligase of Shigella flexneri.